The following is a 300-amino-acid chain: Ribosomal protein L11 methyltransferase (300 aa).

S-adenosyl-L-methionine contacts are provided by Thr-152, Gly-173, Asp-195, and Asn-234.

Belongs to the methyltransferase superfamily. PrmA family.

Its subcellular location is the cytoplasm. The catalysed reaction is L-lysyl-[protein] + 3 S-adenosyl-L-methionine = N(6),N(6),N(6)-trimethyl-L-lysyl-[protein] + 3 S-adenosyl-L-homocysteine + 3 H(+). Functionally, methylates ribosomal protein L11. This Burkholderia vietnamiensis (strain G4 / LMG 22486) (Burkholderia cepacia (strain R1808)) protein is Ribosomal protein L11 methyltransferase.